Reading from the N-terminus, the 565-residue chain is Sulfite reductase [NADPH] hemoprotein beta-component (565 aa).

C429, C435, C474, and C478 together coordinate [4Fe-4S] cluster. Residue C478 participates in siroheme binding.

The protein belongs to the nitrite and sulfite reductase 4Fe-4S domain family. In terms of assembly, alpha(8)-beta(8). The alpha component is a flavoprotein, the beta component is a hemoprotein. It depends on siroheme as a cofactor. [4Fe-4S] cluster serves as cofactor.

It carries out the reaction hydrogen sulfide + 3 NADP(+) + 3 H2O = sulfite + 3 NADPH + 4 H(+). It participates in sulfur metabolism; hydrogen sulfide biosynthesis; hydrogen sulfide from sulfite (NADPH route): step 1/1. Functionally, component of the sulfite reductase complex that catalyzes the 6-electron reduction of sulfite to sulfide. This is one of several activities required for the biosynthesis of L-cysteine from sulfate. The sequence is that of Sulfite reductase [NADPH] hemoprotein beta-component from Shewanella baltica (strain OS185).